Consider the following 147-residue polypeptide: Hemoglobin subunit beta-1 (147 aa).

Residues 3 to 147 enclose the Globin domain; it reads EWTAAERRHV…VVSALGRQYH (145 aa). Residues H64 and H93 each coordinate heme b.

Belongs to the globin family. As to quaternary structure, hb 1 is a heterotetramer of two alpha-1 and two beta-1 chains. As to expression, red blood cells.

Its function is as follows. Involved in oxygen transport from gills to the various peripheral tissues. This Gadus morhua (Atlantic cod) protein is Hemoglobin subunit beta-1 (hbb1).